The sequence spans 465 residues: Asparagine--tRNA ligase (465 aa).

Belongs to the class-II aminoacyl-tRNA synthetase family. In terms of assembly, homodimer.

Its subcellular location is the cytoplasm. It carries out the reaction tRNA(Asn) + L-asparagine + ATP = L-asparaginyl-tRNA(Asn) + AMP + diphosphate + H(+). In Pseudoalteromonas translucida (strain TAC 125), this protein is Asparagine--tRNA ligase.